An 824-amino-acid polypeptide reads, in one-letter code: Glycogen phosphorylase (824 aa).

N6-(pyridoxal phosphate)lysine is present on lysine 667.

This sequence belongs to the glycogen phosphorylase family. Pyridoxal 5'-phosphate serves as cofactor.

It carries out the reaction [(1-&gt;4)-alpha-D-glucosyl](n) + phosphate = [(1-&gt;4)-alpha-D-glucosyl](n-1) + alpha-D-glucose 1-phosphate. In terms of biological role, phosphorylase is an important allosteric enzyme in carbohydrate metabolism. Enzymes from different sources differ in their regulatory mechanisms and in their natural substrates. However, all known phosphorylases share catalytic and structural properties. This Chlamydia pneumoniae (Chlamydophila pneumoniae) protein is Glycogen phosphorylase (glgP).